The following is a 338-amino-acid chain: Tagatose 1,6-diphosphate aldolase (338 aa).

This sequence belongs to the aldolase LacD family.

The enzyme catalyses D-tagatofuranose 1,6-bisphosphate = D-glyceraldehyde 3-phosphate + dihydroxyacetone phosphate. It participates in carbohydrate metabolism; D-tagatose 6-phosphate degradation; D-glyceraldehyde 3-phosphate and glycerone phosphate from D-tagatose 6-phosphate: step 2/2. The chain is Tagatose 1,6-diphosphate aldolase from Listeria innocua serovar 6a (strain ATCC BAA-680 / CLIP 11262).